Consider the following 72-residue polypeptide: Cytochrome c oxidase copper chaperone 2 (72 aa).

2 residues coordinate Cu cation: Cys32 and Cys33. One can recognise a CHCH domain in the interval 32–72 (CCACPDTKKLRDECIVEHGESACTKWIEAHILCLRSEGFKV). 2 consecutive short sequence motifs (cx9C motif) follow at residues 35–45 (CPDTKKLRDEC) and 54–64 (CTKWIEAHILC). 2 disulfides stabilise this stretch: Cys35–Cys64 and Cys45–Cys54.

Belongs to the COX17 family.

The protein resides in the mitochondrion intermembrane space. Functionally, copper chaperone for cytochrome c oxidase (COX). Binds 2 copper ions and delivers them to the Cu(A) site of COX. The protein is Cytochrome c oxidase copper chaperone 2 (COX17-2) of Arabidopsis thaliana (Mouse-ear cress).